Reading from the N-terminus, the 126-residue chain is Nascent polypeptide-associated complex protein (126 aa).

In terms of domain architecture, NAC-A/B spans 10–77; it reads PRMMKQMQKM…AKKVAKEEEK (68 aa).

This sequence belongs to the NAC-alpha family. Homodimer. Interacts with the ribosome. Binds ribosomal RNA.

Its function is as follows. Contacts the emerging nascent chain on the ribosome. This chain is Nascent polypeptide-associated complex protein, found in Methanococcus maripaludis (strain DSM 14266 / JCM 13030 / NBRC 101832 / S2 / LL).